The following is a 369-amino-acid chain: Tyrosyl-DNA phosphodiesterase 2 (369 aa).

Positions 58-77 (EKTEVTGNKRKDDTAEASGT) are disordered. Positions 59 to 71 (KTEVTGNKRKDDT) are enriched in basic and acidic residues. The interval 129-133 (NVDGL) is interaction with 5' end of substrate DNA. Mg(2+) contacts are provided by aspartate 131 and glutamate 161. The interval 235–240 (HLESCK) is interaction with 5' end of substrate DNA. Catalysis depends on aspartate 271, which acts as the Proton donor/acceptor. The tract at residues 273 to 275 (NLR) is interaction with 5' end of substrate DNA.

Belongs to the CCR4/nocturin family. TTRAP/TDP2 subfamily. It depends on Mg(2+) as a cofactor. Mn(2+) serves as cofactor. In terms of tissue distribution, expressed ubiquitously during blastula stages and throughout gastrulation. Shortly after shield formation, expressed weakly in dorsal forerunner cells (DFCs). Between somite stages 5 and 9, expressed in the tailbud and around the Kupffer's vesicle at a higher level than the more uniform expression in the embryo.

The protein localises to the nucleus. The protein resides in the PML body. DNA repair enzyme that can remove a variety of covalent adducts from DNA through hydrolysis of a 5'-phosphodiester bond, giving rise to DNA with a free 5' phosphate. Catalyzes the hydrolysis of dead-end complexes between DNA and the topoisomerase 2 (top2) active site tyrosine residue. Hydrolyzes 5'-phosphoglycolates on protruding 5' ends on DNA double-strand breaks (DSBs) due to DNA damage by radiation and free radicals. Controls gastrulation movements and left/right (L/R) axis determination via smad3-mediated regulation of cdh1/e-cadherin. Regulates the formation of Kupffer's vesicle, a signaling center essential for establishing L/R asymmetry. Modulates smad3 activity through modulating nodal-acvr1/akt4 signaling. In Danio rerio (Zebrafish), this protein is Tyrosyl-DNA phosphodiesterase 2 (tdp2).